Here is a 200-residue protein sequence, read N- to C-terminus: Putative pseudouridine methyltransferase (200 aa).

S-adenosyl-L-methionine-binding residues include Met133 and Cys187.

It belongs to the methyltransferase superfamily. TrmY family.

It is found in the cytoplasm. This Alcanivorax borkumensis (strain ATCC 700651 / DSM 11573 / NCIMB 13689 / SK2) protein is Putative pseudouridine methyltransferase.